A 360-amino-acid polypeptide reads, in one-letter code: ASTRA-associated protein 1 (360 aa).

4 WD repeats span residues 9–46 (AHAA…PAAR), 49–86 (AHEG…NSKG), 167–205 (RGEG…CRML), and 317–357 (PEQS…ENGL).

Belongs to the WD repeat ASA1 family. Component of the ASTRA chromatin remodeling machinery complex.

It localises to the nucleus. In terms of biological role, component of the ASTRA complex involved in chromatin remodeling. The sequence is that of ASTRA-associated protein 1 (ASA1) from Clavispora lusitaniae (strain ATCC 42720) (Yeast).